The sequence spans 225 residues: Heptaprenylglyceryl phosphate synthase (225 aa).

K6 is a binding site for sn-glycerol 1-phosphate. Residues D8 and T34 each contribute to the Mg(2+) site. Residues 153 to 158 (YVEYSG), G183, and 203 to 204 (GN) contribute to the sn-glycerol 1-phosphate site.

This sequence belongs to the GGGP/HepGP synthase family. Group I subfamily. As to quaternary structure, homodimer. Mg(2+) is required as a cofactor.

The catalysed reaction is sn-glycerol 1-phosphate + all-trans-heptaprenyl diphosphate = 3-heptaprenyl-sn-glycero-1-phosphate + diphosphate. It participates in membrane lipid metabolism; glycerophospholipid metabolism. Prenyltransferase that catalyzes in vivo the transfer of the heptaprenyl moiety of heptaprenyl pyrophosphate (HepPP; 35 carbon atoms) to the C3 hydroxyl of sn-glycerol-1-phosphate (G1P), producing heptaprenylglyceryl phosphate (HepGP). This reaction is an ether-bond-formation step in the biosynthesis of archaea-type G1P-based membrane lipids found in Bacillales. The polypeptide is Heptaprenylglyceryl phosphate synthase (Listeria innocua serovar 6a (strain ATCC BAA-680 / CLIP 11262)).